Reading from the N-terminus, the 113-residue chain is Iron-sulfur cluster assembly protein CyaY (113 aa).

This sequence belongs to the frataxin family.

Its function is as follows. Involved in iron-sulfur (Fe-S) cluster assembly. May act as a regulator of Fe-S biogenesis. The polypeptide is Iron-sulfur cluster assembly protein CyaY (Ralstonia nicotianae (strain ATCC BAA-1114 / GMI1000) (Ralstonia solanacearum)).